A 95-amino-acid polypeptide reads, in one-letter code: Small ribosomal subunit protein uS19 (95 aa).

It belongs to the universal ribosomal protein uS19 family.

Protein S19 forms a complex with S13 that binds strongly to the 16S ribosomal RNA. In Thermosipho melanesiensis (strain DSM 12029 / CIP 104789 / BI429), this protein is Small ribosomal subunit protein uS19.